The following is a 367-amino-acid chain: 3-isopropylmalate dehydrogenase (367 aa).

Gly75–Glu88 lines the NAD(+) pocket. The substrate site is built by Arg95, Arg105, Arg133, and Asp230. Mg(2+) contacts are provided by Asp230, Asp254, and Asp258. Gly288–Asn300 lines the NAD(+) pocket.

It belongs to the isocitrate and isopropylmalate dehydrogenases family. LeuB type 1 subfamily. Homodimer. Mg(2+) serves as cofactor. It depends on Mn(2+) as a cofactor.

The protein resides in the cytoplasm. It carries out the reaction (2R,3S)-3-isopropylmalate + NAD(+) = 4-methyl-2-oxopentanoate + CO2 + NADH. It participates in amino-acid biosynthesis; L-leucine biosynthesis; L-leucine from 3-methyl-2-oxobutanoate: step 3/4. Functionally, catalyzes the oxidation of 3-carboxy-2-hydroxy-4-methylpentanoate (3-isopropylmalate) to 3-carboxy-4-methyl-2-oxopentanoate. The product decarboxylates to 4-methyl-2 oxopentanoate. This chain is 3-isopropylmalate dehydrogenase, found in Psychrobacter arcticus (strain DSM 17307 / VKM B-2377 / 273-4).